The primary structure comprises 439 residues: MMRVRFPLLVLLGTVFLASVCVSLKVREDENNPFYLRSSNSFQTLFENQNGRIRLLQRFNKRSPQLENLRDYRIVQFQSKPNTILLPHHADADFLLFVLSGRAILTLVNNDDRDSYNLHPGDAQRIPAGTTYYLVNPHDHQNLKIIKLAIPVNKPGRYDDFFLSSTQAQQSYLQGFSHNILETSFHSEFEEINRVLFGEEEEQRQQEGVIVELSKEQIRQLSRRAKSSSRKTISSEDEPFNLRSRNPIYSNNFGKFFEITPEKNPQLRDLDIFLSSVDINEGALLLPHFNSKAIVILVINEGDANIELVGIKEQQQKQKQEEEPLEVQRYRAELSEDDVFVIPAAYPFVVNATSNLNFLAFGINAENNQRNFLAGEKDNVVRQIERQVQELAFPGSAQDVERLLKKQRESYFVDAQPQQKEEGSKGRKGPFPSILGALY.

The signal sequence occupies residues 1–23; it reads MMRVRFPLLVLLGTVFLASVCVS. Cupin type-1 domains follow at residues 34 to 193 and 240 to 401; these read FYLR…EEIN and FNLR…QDVE. N-linked (GlcNAc...) asparagine glycosylation is present at Asn351. A disordered region spans residues 411–439; that stretch reads YFVDAQPQQKEEGSKGRKGPFPSILGALY. The tract at residues 430–439 is necessary for sorting to protein storage vacuole; the sequence is PFPSILGALY.

It belongs to the 7S seed storage protein family. In terms of assembly, the alpha-, alpha'-, and beta-subunits associate in various combinations to form trimeric proteins. The N-linked glycans are not essential for the folding and assembly into trimers. As to expression, expressed in seeds. Not detected in cotyledons or in mature plants.

The protein resides in the vacuole. The protein localises to the aleurone grain. It is found in the endoplasmic reticulum. It localises to the protein storage vacuole. Functionally, seed storage protein. Accumulates during seed development and is hydrolyzed after germination to provide a carbon and nitrogen source for the developing seedling. The chain is Beta-conglycinin beta subunit 1 from Glycine max (Soybean).